Here is a 1034-residue protein sequence, read N- to C-terminus: Isoleucine--tRNA ligase (1034 aa).

The 'HIGH' region motif lies at 48-58 (PTANGKPHIGH). Residues 588–592 (KMSKH) carry the 'KMSKS' region motif. Residue Lys591 coordinates ATP.

This sequence belongs to the class-I aminoacyl-tRNA synthetase family. IleS type 2 subfamily. As to quaternary structure, monomer. Zn(2+) serves as cofactor.

It localises to the cytoplasm. The enzyme catalyses tRNA(Ile) + L-isoleucine + ATP = L-isoleucyl-tRNA(Ile) + AMP + diphosphate. Catalyzes the attachment of isoleucine to tRNA(Ile). As IleRS can inadvertently accommodate and process structurally similar amino acids such as valine, to avoid such errors it has two additional distinct tRNA(Ile)-dependent editing activities. One activity is designated as 'pretransfer' editing and involves the hydrolysis of activated Val-AMP. The other activity is designated 'posttransfer' editing and involves deacylation of mischarged Val-tRNA(Ile). The sequence is that of Isoleucine--tRNA ligase from Clostridium kluyveri (strain ATCC 8527 / DSM 555 / NBRC 12016 / NCIMB 10680 / K1).